Here is a 247-residue protein sequence, read N- to C-terminus: tRNA pseudouridine synthase A (247 aa).

Asp53 serves as the catalytic Nucleophile. A substrate-binding site is contributed by Tyr111.

It belongs to the tRNA pseudouridine synthase TruA family. In terms of assembly, homodimer.

The catalysed reaction is uridine(38/39/40) in tRNA = pseudouridine(38/39/40) in tRNA. In terms of biological role, formation of pseudouridine at positions 38, 39 and 40 in the anticodon stem and loop of transfer RNAs. The chain is tRNA pseudouridine synthase A from Bacillus pumilus (strain SAFR-032).